The chain runs to 300 residues: Cytochrome f (300 aa).

Residues 1 to 32 form the signal peptide; it reads MMTYLSKQFSKLLFGQLLFLFIGNLLLKPVQA. Y33, C53, C56, and H57 together coordinate heme. The helical transmembrane segment at 267–287 threads the bilayer; sequence LKTFIAFCVTVFIGQLAFVLK.

It belongs to the cytochrome f family. As to quaternary structure, the 4 large subunits of the cytochrome b6-f complex are cytochrome b6, subunit IV (17 kDa polypeptide, petD), cytochrome f and the Rieske protein, while the 4 small subunits are PetG, PetL, PetM and PetN. The complex functions as a dimer. It depends on heme as a cofactor.

It is found in the plastid. It localises to the chloroplast thylakoid membrane. In terms of biological role, component of the cytochrome b6-f complex, which mediates electron transfer between photosystem II (PSII) and photosystem I (PSI), cyclic electron flow around PSI, and state transitions. This Cyanidioschyzon merolae (strain NIES-3377 / 10D) (Unicellular red alga) protein is Cytochrome f.